The primary structure comprises 395 residues: Calreticulin (395 aa).

A signal peptide spans 1–15 (MKSLCLLAIVAVVSA). A disulfide bridge connects residues Cys-101 and Cys-133. The an alpha-D-glucoside site is built by Tyr-105, Lys-107, Tyr-124, and Asp-131. Repeat copies occupy residues 186 to 197 (AQTGSLEEDWDL), 205 to 216 (DPDAKKPEDWDE), 222 to 233 (DAEDAKPEDWEK), 239 to 250 (DPDAKKPEDWDD), 254 to 264 (GEWEPPMIDNP), 268 to 278 (GEWKPKQIKNP), and 282 to 292 (GKWIHPEIENP). The interval 186 to 250 (AQTGSLEEDW…DAKKPEDWDD (65 aa)) is 4 X approximate repeats. Residues 193-301 (EDWDLLPAKK…PEYTPDDELY (109 aa)) are P-domain. The span at 202–212 (KIKDPDAKKPE) shows a compositional bias: basic and acidic residues. Residues 202 to 255 (KIKDPDAKKPEDWDEREYIDDAEDAKPEDWEKPEHIPDPDAKKPEDWDDEMDGE) form a disordered region. The span at 213–224 (DWDEREYIDDAE) shows a compositional bias: acidic residues. Positions 225-246 (DAKPEDWEKPEHIPDPDAKKPE) are enriched in basic and acidic residues. Residues 254–292 (GEWEPPMIDNPEYKGEWKPKQIKNPAYKGKWIHPEIENP) form a 3 X approximate repeats region. The interval 302 to 395 (SYESWGAIGF…KEEEEGHDEL (94 aa)) is C-domain. Asp-312 is an an alpha-D-glucoside binding site. Basic and acidic residues predominate over residues 340–380 (ETFDKLKTVEKEKKEKADEETRKAEEEARKKAEEEKEAKKD). The segment at 340 to 395 (ETFDKLKTVEKEKKEKADEETRKAEEEARKKAEEEKEAKKDDDEEEKEEEEGHDEL) is disordered. Positions 381–395 (DDEEEKEEEEGHDEL) are enriched in acidic residues. The short motif at 392 to 395 (HDEL) is the Prevents secretion from ER element.

Belongs to the calreticulin family. Cleaved by caspase ced-3 in vitro.

It localises to the endoplasmic reticulum lumen. Molecular calcium-binding chaperone promoting folding, oligomeric assembly and quality control in the endoplasmic reticulum (ER) via the calreticulin/calnexin cycle. This lectin may interact transiently with almost all of the monoglucosylated glycoproteins that are synthesized in the ER. Probably by controlling the folding of extracellular matrix protein unc-52/Perlecan, may play a role in the formation of fibrous organelles, a hemidesmosome-like structure attaching muscles to the epidermis. Protects dopaminergic neurons against oxidative stress-induced neurodegeneration. May play a role in protection against ER stress. Plays a role in modulating lifespan, acting by influencing ER calcium homeostasis. The sequence is that of Calreticulin (crt-1) from Caenorhabditis elegans.